A 1066-amino-acid polypeptide reads, in one-letter code: Vinculin (1066 aa).

The segment at 1 to 835 (MPVFHTRTIE…GAVAKVREAF (835 aa)) is N-terminal globular head. A Phosphoserine modification is found at S97. The tract at residues 168-208 (MTKMAKMIDERQQELTHQEHRVMLVNSMNTVKELLPVLISA) is talin-interaction. The residue at position 173 (K173) is an N6-acetyllysine. 3 consecutive repeat copies span residues 259 to 369 (ASKD…KVEN), 370 to 479 (AARK…KTNR), and 480 to 589 (AVAN…QMQE). The segment at 259–589 (ASKDTEAMKR…LKDLKAQMQE (331 aa)) is 3 X 112 AA tandem repeats. S260, S272, S275, S290, S346, and S434 each carry phosphoserine. K496 carries the N6-acetyllysine modification. The residue at position 537 (Y537) is a Phosphotyrosine. Phosphoserine occurs at positions 574, 579, and 600. 2 positions are modified to phosphothreonine: T604 and T672. Residue S721 is modified to Phosphoserine. The interval 741 to 764 (MANIQPQMLVAGATSIARRANRIL) is interaction with ACTN4. Phosphoserine is present on residues S795 and S809. Position 822 is a phosphotyrosine (Y822). The linker (Pro-rich) stretch occupies residues 836–878 (QPQEPDFPPPPPDLEQLRLTDELAPPKPPLPEGEVPPPRPPPP). Positions 857–887 (ELAPPKPPLPEGEVPPPRPPPPEEKDEEFPE) are disordered. The segment covering 860–876 (PPKPPLPEGEVPPPRPP) has biased composition (pro residues). The C-terminal tail stretch occupies residues 879-1066 (EEKDEEFPEQ…RWVRKTPWYQ (188 aa)). Facilitates phospholipid membrane insertion regions lie at residues 935-978 (RLVR…KRIR) and 1052-1066 (AGFTLRWVRKTPWYQ). The residue at position 1065 (Y1065) is a Phosphotyrosine; by SRC-type Tyr-kinases.

The protein belongs to the vinculin/alpha-catenin family. As to quaternary structure, exhibits self-association properties. Part of a complex composed of THSD1, PTK2/FAK1, TLN1 and VCL. Interacts with APBB1IP, NRAP and TLN1. Interacts with SYNM. Interacts with CTNNB1 and this interaction is necessary for its localization to the cell-cell junctions and for its function in regulating cell surface expression of E-cadherin. Interacts with SORBS1. Interacts with SYNM. Interacts with CTNNA1. Binds to ACTN4; this interaction triggers conformational changes. Interacts with FLII. Post-translationally, phosphorylated; on serines, threonines and tyrosines. Phosphorylation on Tyr-1065 in activated platelets affects head-tail interactions and cell spreading but has no effect on actin binding nor on localization to focal adhesion plaques. In terms of processing, acetylated; mainly by myristic acid but also by a small amount of palmitic acid.

It localises to the cell membrane. The protein resides in the cell junction. Its subcellular location is the adherens junction. It is found in the focal adhesion. The protein localises to the cytoplasm. It localises to the cytoskeleton. The protein resides in the sarcolemma. Its subcellular location is the cell projection. It is found in the podosome. Functionally, actin filament (F-actin)-binding protein involved in cell-matrix adhesion and cell-cell adhesion. Regulates cell-surface E-cadherin expression and potentiates mechanosensing by the E-cadherin complex. May also play important roles in cell morphology and locomotion. This Mus musculus (Mouse) protein is Vinculin (Vcl).